A 372-amino-acid polypeptide reads, in one-letter code: Serine/threonine-protein kinase 17B (372 aa).

Positions 33–293 constitute a Protein kinase domain; sequence ILTSKELGRG…AEICLSHSWL (261 aa). ATP is bound by residues 39-47 and Lys-62; that span reads LGRGKFAVV. Asp-158 acts as the Proton acceptor in catalysis. A disordered region spans residues 305-362; it reads EETSSSSQTQDHSVRSSEDKTSKSSCNGTCGDREDKENIPEDSSMVSKRFRFDDSLPN. Residues 316–326 are compositionally biased toward basic and acidic residues; the sequence is HSVRSSEDKTS.

Belongs to the protein kinase superfamily. CAMK Ser/Thr protein kinase family. DAP kinase subfamily. As to quaternary structure, interacts with CHP1; the interaction induces CHP1 to translocate from the Golgi to the nucleus. In terms of processing, autophosphorylated. In terms of tissue distribution, highly expressed in placenta, lung, pancreas. Lower levels in heart, brain, liver, skeletal muscle and kidney.

It localises to the nucleus. The protein resides in the cell membrane. The protein localises to the endoplasmic reticulum-Golgi intermediate compartment. The catalysed reaction is L-seryl-[protein] + ATP = O-phospho-L-seryl-[protein] + ADP + H(+). It carries out the reaction L-threonyl-[protein] + ATP = O-phospho-L-threonyl-[protein] + ADP + H(+). Its function is as follows. Phosphorylates myosin light chains. Acts as a positive regulator of apoptosis. The protein is Serine/threonine-protein kinase 17B (STK17B) of Homo sapiens (Human).